We begin with the raw amino-acid sequence, 367 residues long: Oleoyl-acyl carrier protein thioesterase 2, chloroplastic (367 aa).

Residues 1 to 48 constitute a chloroplast transit peptide; the sequence is MLKLSCNVTDHIHNLFSNSRRIFVPVHRQTRPISCFQLKKEPLRAILS. Catalysis depends on residues Asn263, His265, and Cys300.

The protein belongs to the acyl-ACP thioesterase family.

It localises to the plastid. Its subcellular location is the chloroplast. It catalyses the reaction (9Z)-octadecenoyl-[ACP] + H2O = (9Z)-octadecenoate + holo-[ACP] + H(+). In terms of biological role, plays an essential role in chain termination during de novo fatty acid synthesis. Possesses high thioesterase activity for oleoyl-ACP versus other acyl-ACPs. In Arabidopsis thaliana (Mouse-ear cress), this protein is Oleoyl-acyl carrier protein thioesterase 2, chloroplastic (FATA2).